Consider the following 365-residue polypeptide: MLTASLYKQLPVLTTTATSTYSFIRLSSTLATPPHSTTTTSPSSPAFHQPNHPQQFANPNTSVFDVSTRIYTQEGIDNNNDTKFLTKAPYPHPVFPQDECENVTVTHRETKTLGDKISFRSIQFMRQCFDLVTGYAVPKTNNPDEFKGTRWEMTEGKWLTRCIFLESVAGVPGSVAGFLRHLHSLRMLRRDKAWIETLLDEAYNERMHLLTFIKIGKPSWFTRSIIYVGQGVFTNVFFLLYLLNPRYCHRFVGYLEEEAVRTYSHLLDELAVPGKLPAFETMKIPEVAVQYWPELTPKSSFKDLILRIRADEAKHREVNHTFANLEQKTDRNPFALKIEGLNKPQPNHGINVMRPTGWEKQDLQL.

Over residues 32-46 (TPPHSTTTTSPSSPA) the composition is skewed to low complexity. Residues 32-52 (TPPHSTTTTSPSSPAFHQPNH) form a disordered region. Residues Glu-166, Glu-205, and His-208 each contribute to the Fe cation site. A helical transmembrane segment spans residues 220–242 (WFTRSIIYVGQGVFTNVFFLLYL). Fe cation is bound by residues Glu-256, Glu-257, Glu-312, and His-315. The segment at 345-365 (QPNHGINVMRPTGWEKQDLQL) is disordered.

The protein belongs to the alternative oxidase family. It depends on Fe cation as a cofactor.

The protein resides in the mitochondrion inner membrane. Functionally, catalyzes cyanide-resistant oxygen consumption. May increase respiration when the cytochrome respiratory pathway is restricted, or in response to low temperatures. This chain is Alternative oxidase 2, mitochondrial (AOX2), found in Candida albicans (Yeast).